The sequence spans 149 residues: uncharacterized protein (149 aa).

The next 2 helical transmembrane spans lie at Ile91–Tyr111 and Ile122–Leu142.

Its subcellular location is the membrane. This is an uncharacterized protein from Dictyostelium discoideum (Social amoeba).